The sequence spans 436 residues: Histidinol dehydrogenase (436 aa).

Residues threonine 240, glutamine 262, and histidine 265 each contribute to the substrate site. Zn(2+) is bound by residues glutamine 262 and histidine 265. Residues glutamate 331 and histidine 332 each act as proton acceptor in the active site. The substrate site is built by histidine 332, aspartate 365, glutamate 419, and histidine 424. A Zn(2+)-binding site is contributed by aspartate 365. Histidine 424 contributes to the Zn(2+) binding site.

It belongs to the histidinol dehydrogenase family. Zn(2+) serves as cofactor.

It carries out the reaction L-histidinol + 2 NAD(+) + H2O = L-histidine + 2 NADH + 3 H(+). The protein operates within amino-acid biosynthesis; L-histidine biosynthesis; L-histidine from 5-phospho-alpha-D-ribose 1-diphosphate: step 9/9. Catalyzes the sequential NAD-dependent oxidations of L-histidinol to L-histidinaldehyde and then to L-histidine. The chain is Histidinol dehydrogenase from Leifsonia xyli subsp. xyli (strain CTCB07).